A 180-amino-acid polypeptide reads, in one-letter code: Large ribosomal subunit protein bL17 (180 aa).

The interval 134–180 (AQAKAKKAAAMPTEESEAKPAEEGDVVGASEPDAKAPEEPPTEAPEN) is disordered.

The protein belongs to the bacterial ribosomal protein bL17 family. As to quaternary structure, part of the 50S ribosomal subunit. Contacts protein L32.

This is Large ribosomal subunit protein bL17 from Mycobacterium tuberculosis (strain CDC 1551 / Oshkosh).